A 358-amino-acid chain; its full sequence is Protein-glutamate methylesterase/protein-glutamine glutaminase (358 aa).

Residues 5 to 122 (SVLIIDDSAL…RNSLEAYTDE (118 aa)) form the Response regulatory domain. Aspartate 56 is modified (4-aspartylphosphate). In terms of domain architecture, CheB-type methylesterase spans 159–351 (GISTEKLIII…RRILARLVGA (193 aa)). Residues serine 171, histidine 197, and aspartate 293 contribute to the active site.

Belongs to the CheB family. Phosphorylated by CheA. Phosphorylation of the N-terminal regulatory domain activates the methylesterase activity.

It is found in the cytoplasm. It carries out the reaction [protein]-L-glutamate 5-O-methyl ester + H2O = L-glutamyl-[protein] + methanol + H(+). The enzyme catalyses L-glutaminyl-[protein] + H2O = L-glutamyl-[protein] + NH4(+). Its function is as follows. Involved in chemotaxis. Part of a chemotaxis signal transduction system that modulates chemotaxis in response to various stimuli. Catalyzes the demethylation of specific methylglutamate residues introduced into the chemoreceptors (methyl-accepting chemotaxis proteins or MCP) by CheR. Also mediates the irreversible deamidation of specific glutamine residues to glutamic acid. In Nitrosomonas europaea (strain ATCC 19718 / CIP 103999 / KCTC 2705 / NBRC 14298), this protein is Protein-glutamate methylesterase/protein-glutamine glutaminase.